A 378-amino-acid polypeptide reads, in one-letter code: Chlorophyll synthase, chloroplastic (378 aa).

The transit peptide at 1–45 directs the protein to the chloroplast; it reads MATSHPLAAAAATSSSSATFRPPLRFLSSPPSSLTLNRRRSFPVV. 7 helical membrane passes run 173–193, 199–219, 232–252, 257–277, 302–322, 327–347, and 357–377; these read VITQ…LLDI, FPII…YSAP, FALG…LFGT, IVVL…VNDF, WICV…LLST, YALA…QYFL, and YQAS…LATS.

The protein belongs to the UbiA prenyltransferase family. Chlorophyll synthase subfamily. It depends on Mg(2+) as a cofactor. The cofactor is Zn(2+). Mn(2+) serves as cofactor.

The protein resides in the plastid. Its subcellular location is the chloroplast membrane. It catalyses the reaction phytyl diphosphate + chlorophyllide a + H(+) = chlorophyll a + diphosphate. Its activity is regulated as follows. Inhibited by N-phenylmaleimide (NPM) and diacetyl. Involved in one of the last steps of the biosynthesis of chlorophyll a. Catalyzes the esterification of chlorophillide a with either geranylgeranyldiphosphate (GGPP) or phytyldiphosphate (PhyPP). May also use with a lower efficiency the monophosphates GGMP and PhyMP, but not the non-phosphorylated alcohols geranylgeraniol and phytol. The tetraprenyl diphosphate must bind to the enzyme as the first substrate and esterification occurs when this pre-loaded enzyme meets the second substrate, chlorophyllide. This chain is Chlorophyll synthase, chloroplastic (CHLG), found in Avena sativa (Oat).